The chain runs to 505 residues: MFS-type transporter oryN (505 aa).

Residues 1 to 54 (MAVAELPNIVSTDSSPSPHPGSRLSSEPTDIESQKAPSNAEPKTDPNLVTWDGP) form a disordered region. 13 helical membrane-spanning segments follow: residues 69–89 (AFVT…SSIF), 106–126 (VVTL…PVWG), 135–155 (KWPM…VAVA), 166–186 (FLTG…LVDM), 193–213 (GVAM…APLM), 226–246 (FTQW…VFGL), 280–300 (GIKD…VTEP), 301–321 (ILLL…LVFV), 337–357 (ISAL…AIVV), 376–396 (LPLM…FAWT), 401–421 (IHWA…YMVF), 440–460 (IGAN…FGPF), and 468–488 (AWAS…PVLF).

The protein belongs to the major facilitator superfamily. CAR1 family.

The protein resides in the membrane. In terms of biological role, MFS-type transporter; part of the gene cluster that mediates the biosynthesis of oryzines, natural products with an unusual maleidride backbone. This chain is MFS-type transporter oryN, found in Aspergillus oryzae (strain ATCC 42149 / RIB 40) (Yellow koji mold).